A 100-amino-acid chain; its full sequence is Replication restart protein PriB (100 aa).

Residues 1–99 (MGFNNLVSLA…LRIQNIQEYK (99 aa)) enclose the SSB domain.

It belongs to the PriB family. In terms of assembly, homodimer. Interacts with PriA and DnaT. Component of the replication restart primosome. Primosome assembly occurs via a 'hand-off' mechanism. PriA binds to replication forks, subsequently PriB then DnaT bind; DnaT then displaces ssDNA to generate the helicase loading substrate.

Its function is as follows. Involved in the restart of stalled replication forks, which reloads the replicative helicase on sites other than the origin of replication; the PriA-PriB pathway is the major replication restart pathway. During primosome assembly it facilitates complex formation between PriA and DnaT on DNA; stabilizes PriA on DNA. Stimulates the DNA unwinding activity of PriA helicase. The polypeptide is Replication restart protein PriB (Neisseria meningitidis serogroup B (strain ATCC BAA-335 / MC58)).